A 127-amino-acid chain; its full sequence is Large ribosomal subunit protein bL12 (127 aa).

The disordered stretch occupies residues 93 to 127 (LVDEAPNPVSEGVSREEADDLKAQIEDAGGEVELQ). Over residues 105–117 (VSREEADDLKAQI) the composition is skewed to basic and acidic residues.

This sequence belongs to the bacterial ribosomal protein bL12 family. As to quaternary structure, homodimer. Part of the ribosomal stalk of the 50S ribosomal subunit. Forms a multimeric L10(L12)X complex, where L10 forms an elongated spine to which 2 to 4 L12 dimers bind in a sequential fashion. Binds GTP-bound translation factors.

In terms of biological role, forms part of the ribosomal stalk which helps the ribosome interact with GTP-bound translation factors. Is thus essential for accurate translation. The chain is Large ribosomal subunit protein bL12 from Salinibacter ruber (strain DSM 13855 / M31).